A 381-amino-acid polypeptide reads, in one-letter code: Anti-sigma-I factor RsgI (381 aa).

The Cytoplasmic portion of the chain corresponds to 1–63 (MRRGIIVEKN…FDFFKLRPFK (63 aa)). The region spanning 2–50 (RRGIIVEKNKKFVTLLTPDGQFLKAKNDRHSYEIGEEIMLPSETRMGRR) is the RsgI N-terminal anti-sigma domain. Residues 64-84 (MGIFTMTAIMLFIFIVLPVFS) form a helical membrane-spanning segment. At 85-381 (NNKAYAYMTI…NEDSPSAPGE (297 aa)) the chain is on the extracellular side. The segment at 198 to 381 (SDMQTREKAK…NEDSPSAPGE (184 aa)) is disordered. Composition is skewed to basic and acidic residues over residues 200–210 (MQTREKAKKEG), 219–244 (SNEKNDNKDIKDDSSKPSGEEDQKSD), 273–321 (GDQK…DKGN), and 349–359 (SRRDNASDRRN).

Interacts (via RsgI N-terminal anti-sigma domain) with SigI.

It localises to the cell membrane. Its function is as follows. Anti-sigma factor for SigI. Negatively regulates SigI activity through direct interaction. The sequence is that of Anti-sigma-I factor RsgI from Bacillus subtilis (strain 168).